A 480-amino-acid polypeptide reads, in one-letter code: Ribulose bisphosphate carboxylase large chain (480 aa).

A propeptide spanning residues 1–2 (MS) is cleaved from the precursor. An N-acetylproline modification is found at Pro-3. At Lys-14 the chain carries N6,N6,N6-trimethyllysine. The substrate site is built by Asn-123 and Thr-173. The active-site Proton acceptor is the Lys-175. Residue Lys-177 coordinates substrate. The Mg(2+) site is built by Lys-201, Asp-203, and Glu-204. Lys-201 carries the N6-carboxylysine modification. His-294 (proton acceptor) is an active-site residue. 3 residues coordinate substrate: Arg-295, His-327, and Ser-379.

Belongs to the RuBisCO large chain family. Type I subfamily. Heterohexadecamer of 8 large chains and 8 small chains; disulfide-linked. The disulfide link is formed within the large subunit homodimers. It depends on Mg(2+) as a cofactor. The disulfide bond which can form in the large chain dimeric partners within the hexadecamer appears to be associated with oxidative stress and protein turnover.

The protein localises to the plastid. Its subcellular location is the chloroplast. The catalysed reaction is 2 (2R)-3-phosphoglycerate + 2 H(+) = D-ribulose 1,5-bisphosphate + CO2 + H2O. It catalyses the reaction D-ribulose 1,5-bisphosphate + O2 = 2-phosphoglycolate + (2R)-3-phosphoglycerate + 2 H(+). RuBisCO catalyzes two reactions: the carboxylation of D-ribulose 1,5-bisphosphate, the primary event in carbon dioxide fixation, as well as the oxidative fragmentation of the pentose substrate in the photorespiration process. Both reactions occur simultaneously and in competition at the same active site. The protein is Ribulose bisphosphate carboxylase large chain of Acorus calamus var. americanus (American sweet flag).